Consider the following 675-residue polypeptide: NADH-ubiquinone oxidoreductase 75 kDa subunit (675 aa).

The 2Fe-2S ferredoxin-type domain maps to 2–80 (KNISFKVNDF…SMNIYTNTLK (79 aa)). [2Fe-2S] cluster-binding residues include C36, C47, C50, and C64. One can recognise a 4Fe-4S His(Cys)3-ligated-type domain in the interval 80–119 (KVKKARESVLEFLLANHPLDCPICDQGGECDLQDQSVVFG). The [4Fe-4S] cluster site is built by H96, C100, C103, C109, C148, C151, C154, and C198. The 57-residue stretch at 217–273 (LKSYNSIDVLDSLHSNIRVDIRGTKIMRILPRVNSELNEDWITDKIRFSYDSFRRQR) folds into the 4Fe-4S Mo/W bis-MGD-type domain.

The protein belongs to the complex I 75 kDa subunit family. Complex I is composed of about 30 different subunits. [2Fe-2S] cluster is required as a cofactor. [4Fe-4S] cluster serves as cofactor.

The protein localises to the mitochondrion inner membrane. It carries out the reaction a ubiquinone + NADH + 5 H(+)(in) = a ubiquinol + NAD(+) + 4 H(+)(out). Functionally, core subunit of the mitochondrial membrane respiratory chain NADH dehydrogenase (Complex I) that is believed to belong to the minimal assembly required for catalysis. Complex I functions in the transfer of electrons from NADH to the respiratory chain. The immediate electron acceptor for the enzyme is believed to be ubiquinone. This is the largest subunit of complex I and it is a component of the iron-sulfur (IP) fragment of the enzyme. It may form part of the active site crevice where NADH is oxidized. This Acanthamoeba castellanii (Amoeba) protein is NADH-ubiquinone oxidoreductase 75 kDa subunit (NAD11).